The chain runs to 167 residues: Leptin (167 aa).

The signal sequence occupies residues methionine 1–alanine 21. Cysteine 117 and cysteine 167 are joined by a disulfide.

This sequence belongs to the leptin family.

The protein localises to the secreted. Functionally, key player in the regulation of energy balance and body weight control. Once released into the circulation, has central and peripheral effects by binding LEPR, found in many tissues, which results in the activation of several major signaling pathways. In the hypothalamus, acts as an appetite-regulating factor that induces a decrease in food intake and an increase in energy consumption by inducing anorexinogenic factors and suppressing orexigenic neuropeptides, also regulates bone mass and secretion of hypothalamo-pituitary-adrenal hormones. In the periphery, increases basal metabolism, influences reproductive function, regulates pancreatic beta-cell function and insulin secretion, is pro-angiogenic for endothelial cell and affects innate and adaptive immunity. In the arcuate nucleus of the hypothalamus, activates by depolarization POMC neurons inducing FOS and SOCS3 expression to release anorexigenic peptides and inhibits by hyperpolarization NPY neurons inducing SOCS3 with a consequent reduction on release of orexigenic peptides. In addition to its known satiety inducing effect, has a modulatory role in nutrient absorption. In the intestine, reduces glucose absorption by enterocytes by activating PKC and leading to a sequential activation of p38, PI3K and ERK signaling pathways which exerts an inhibitory effect on glucose absorption. Acts as a growth factor on certain tissues, through the activation of different signaling pathways increases expression of genes involved in cell cycle regulation such as CCND1, via JAK2-STAT3 pathway, or VEGFA, via MAPK1/3 and PI3K-AKT1 pathways. May also play an apoptotic role via JAK2-STAT3 pathway and up-regulation of BIRC5 expression. Pro-angiogenic, has mitogenic activity on vascular endothelial cells and plays a role in matrix remodeling by regulating the expression of matrix metalloproteinases (MMPs) and tissue inhibitors of metalloproteinases (TIMPs). In innate immunity, modulates the activity and function of neutrophils by increasing chemotaxis and the secretion of oxygen radicals. Increases phagocytosis by macrophages and enhances secretion of pro-inflammatory mediators. Increases cytotoxic ability of NK cells. Plays a pro-inflammatory role, in synergy with IL1B, by inducing NOS2 which promotes the production of IL6, IL8 and Prostaglandin E2, through a signaling pathway that involves JAK2, PI3K, MAP2K1/MEK1 and MAPK14/p38. In adaptive immunity, promotes the switch of memory T-cells towards T helper-1 cell immune responses. Increases CD4(+)CD25(-) T-cell proliferation and reduces autophagy during TCR (T-cell receptor) stimulation, through MTOR signaling pathway activation and BCL2 up-regulation. The protein is Leptin (Lep) of Rattus norvegicus (Rat).